A 333-amino-acid chain; its full sequence is Electron transfer flavoprotein subunit alpha, mitochondrial (333 aa).

A mitochondrion-targeting transit peptide spans 1–19 (MFRAAAPGQLRRAASLLRF). Residues 20-204 (QSTLVIAEHA…GISEWLDQKL (185 aa)) are domain I. K59 carries the N6-acetyllysine; alternate modification. Position 59 is an N6-succinyllysine; alternate (K59). K62 is subject to N6-acetyllysine. K69 is modified (N6-acetyllysine; alternate). K69 bears the N6-succinyllysine; alternate mark. At K75 the chain carries N6-acetyllysine. N6-acetyllysine; alternate is present on K85. K85 carries the N6-succinyllysine; alternate modification. At T93 the chain carries Phosphothreonine. An N6-acetyllysine mark is found at K101 and K139. S140 is modified (phosphoserine). K158 is modified (N6-acetyllysine; alternate). Residue K158 is modified to N6-succinyllysine; alternate. The residue at position 164 (K164) is an N6-acetyllysine. Position 187 is an N6-succinyllysine (K187). K203 carries the post-translational modification N6-acetyllysine; alternate. K203 carries the post-translational modification N6-succinyllysine; alternate. Residues 205 to 333 (TKSDRPELTG…PEMTEILKKK (129 aa)) form a domain II region. K216 is subject to N6-succinyllysine. Position 223 (R223) interacts with FAD. An N6-acetyllysine; alternate mark is found at K226 and K232. K226 and K232 each carry N6-succinyllysine; alternate. FAD-binding positions include S248, 263 to 266 (VGQT), 281 to 286 (SGAIQH), and N300. At K301 the chain carries N6-succinyllysine. 318-319 (DL) is a binding site for FAD.

This sequence belongs to the ETF alpha-subunit/FixB family. In terms of assembly, heterodimer composed of ETFA and ETFB. Identified in a complex that contains ETFA, ETFB and ETFRF1. Interaction with ETFRF1 promotes dissociation of the bound FAD and loss of electron transfer activity. Interacts with TASOR. The cofactor is FAD.

It localises to the mitochondrion matrix. Functionally, heterodimeric electron transfer flavoprotein that accepts electrons from several mitochondrial dehydrogenases, including acyl-CoA dehydrogenases, glutaryl-CoA and sarcosine dehydrogenase. It transfers the electrons to the main mitochondrial respiratory chain via ETF-ubiquinone oxidoreductase (ETF dehydrogenase). Required for normal mitochondrial fatty acid oxidation and normal amino acid metabolism. This Rattus norvegicus (Rat) protein is Electron transfer flavoprotein subunit alpha, mitochondrial (Etfa).